The sequence spans 445 residues: Methylenetetrahydrofolate--tRNA-(uracil-5-)-methyltransferase TrmFO (445 aa).

An FAD-binding site is contributed by 9–14; that stretch reads GGGLAG.

This sequence belongs to the MnmG family. TrmFO subfamily. It depends on FAD as a cofactor.

It localises to the cytoplasm. It carries out the reaction uridine(54) in tRNA + (6R)-5,10-methylene-5,6,7,8-tetrahydrofolate + NADH + H(+) = 5-methyluridine(54) in tRNA + (6S)-5,6,7,8-tetrahydrofolate + NAD(+). It catalyses the reaction uridine(54) in tRNA + (6R)-5,10-methylene-5,6,7,8-tetrahydrofolate + NADPH + H(+) = 5-methyluridine(54) in tRNA + (6S)-5,6,7,8-tetrahydrofolate + NADP(+). Catalyzes the folate-dependent formation of 5-methyl-uridine at position 54 (M-5-U54) in all tRNAs. This is Methylenetetrahydrofolate--tRNA-(uracil-5-)-methyltransferase TrmFO from Aquifex aeolicus (strain VF5).